Reading from the N-terminus, the 1056-residue chain is PH and SEC7 domain-containing protein 4 (1056 aa).

Residues 25 to 42 (LEPHPGECPRETCSHEDP) show a composition bias toward basic and acidic residues. Disordered stretches follow at residues 25 to 71 (LEPH…SGVE), 87 to 149 (CQEQ…QNRS), 195 to 239 (LPGD…QWGA), 340 to 362 (GAPAAPPGHGESEGDRLGPAPSA), 388 to 533 (VQPW…GDVQ), and 546 to 581 (LRTPMNSSWLPGSPMPQAQSPEEGQRPPAGDKLANG). Polar residues-rich tracts occupy residues 88-99 (QEQTRATDPPES) and 128-137 (NTASPGSPVN). A phosphoserine mark is found at serine 131, serine 134, and serine 143. Over residues 207 to 220 (ENEDSGEDSSEPEG) the composition is skewed to acidic residues. Position 413 is a phosphoserine (serine 413). The span at 414 to 423 (QDRDEREGGH) shows a compositional bias: basic and acidic residues. Low complexity predominate over residues 438 to 456 (RSPASSPEPSSPESESRGP). 3 positions are modified to phosphoserine: serine 448, serine 469, and serine 491. Polar residues-rich tracts occupy residues 466–476 (QEGSPQLQHHS) and 486–502 (DASQSSLLETDGEQPSS). Residues 504-522 (KKKEAGEAPKPGEEVKSEG) are compositionally biased toward basic and acidic residues. An SEC7 domain is found at 544-736 (ENLRTPMNSS…KALYWSIRSE (193 aa)). The segment covering 548–567 (TPMNSSWLPGSPMPQAQSPE) has biased composition (polar residues). Positions 776 to 892 (PTYKQGILAR…WIARINLAAA (117 aa)) constitute a PH domain. A coiled-coil region spans residues 921–976 (SSLEEQHRSHENCLDAAADDLLDLQRNLPERRGRGRELEEHRLRKEYLEYEKTRYE). Positions 1004 to 1056 (AGGTREPKLSLKKSHSSPSLHQDEAPTTAKVKRNISERRTYRKIIPKRNRNQL) are disordered. Serine 1019 and serine 1022 each carry phosphoserine. Over residues 1043 to 1056 (TYRKIIPKRNRNQL) the composition is skewed to basic residues.

As to expression, widely expressed. Highest levels of expression are found in placenta, pancreas, spleen, thymus and peripheral blood.

Its subcellular location is the cell membrane. The protein localises to the cell projection. It is found in the ruffle membrane. Functionally, guanine nucleotide exchange factor for ARF6 and ARL14/ARF7. Through ARL14 activation, controls the movement of MHC class II-containing vesicles along the actin cytoskeleton in dendritic cells. Involved in membrane recycling. Interacts with several phosphatidylinositol phosphate species, including phosphatidylinositol 3,4-bisphosphate, phosphatidylinositol 3,5-bisphosphate and phosphatidylinositol 4,5-bisphosphate. This Homo sapiens (Human) protein is PH and SEC7 domain-containing protein 4 (PSD4).